A 333-amino-acid polypeptide reads, in one-letter code: tRNA N6-adenosine threonylcarbamoyltransferase (333 aa).

Fe cation-binding residues include His110 and His114. Substrate is bound by residues 133–137 (IVSGG), Asp166, Gly179, Asp183, and Asn275. Asp302 contributes to the Fe cation binding site.

It belongs to the KAE1 / TsaD family. Fe(2+) serves as cofactor.

The protein resides in the cytoplasm. The catalysed reaction is L-threonylcarbamoyladenylate + adenosine(37) in tRNA = N(6)-L-threonylcarbamoyladenosine(37) in tRNA + AMP + H(+). Required for the formation of a threonylcarbamoyl group on adenosine at position 37 (t(6)A37) in tRNAs that read codons beginning with adenine. Is involved in the transfer of the threonylcarbamoyl moiety of threonylcarbamoyl-AMP (TC-AMP) to the N6 group of A37, together with TsaE and TsaB. TsaD likely plays a direct catalytic role in this reaction. The sequence is that of tRNA N6-adenosine threonylcarbamoyltransferase from Thermodesulfovibrio yellowstonii (strain ATCC 51303 / DSM 11347 / YP87).